Consider the following 88-residue polypeptide: Small ribosomal subunit protein bS20 (88 aa).

A compositionally biased stretch (basic residues) spans 1 to 21 (MANSKSAKKRALQSEKRRQHN). Residues 1–26 (MANSKSAKKRALQSEKRRQHNASRSS) form a disordered region.

It belongs to the bacterial ribosomal protein bS20 family.

Functionally, binds directly to 16S ribosomal RNA. This Shewanella halifaxensis (strain HAW-EB4) protein is Small ribosomal subunit protein bS20.